The sequence spans 332 residues: tRNA U34 carboxymethyltransferase (332 aa).

Residues lysine 96, tryptophan 110, lysine 115, glycine 135, 186-187 (LE), methionine 204, tyrosine 208, and arginine 323 contribute to the carboxy-S-adenosyl-L-methionine site.

Belongs to the class I-like SAM-binding methyltransferase superfamily. CmoB family. In terms of assembly, homotetramer.

It carries out the reaction carboxy-S-adenosyl-L-methionine + 5-hydroxyuridine(34) in tRNA = 5-carboxymethoxyuridine(34) in tRNA + S-adenosyl-L-homocysteine + H(+). In terms of biological role, catalyzes carboxymethyl transfer from carboxy-S-adenosyl-L-methionine (Cx-SAM) to 5-hydroxyuridine (ho5U) to form 5-carboxymethoxyuridine (cmo5U) at position 34 in tRNAs. The chain is tRNA U34 carboxymethyltransferase from Hydrogenovibrio crunogenus (strain DSM 25203 / XCL-2) (Thiomicrospira crunogena).